A 348-amino-acid polypeptide reads, in one-letter code: NADH-ubiquinone oxidoreductase chain 2 (348 aa).

9 helical membrane-spanning segments follow: residues 3–23 (PYVL…TFAS), 60–80 (FLTQ…NAWM), 96–116 (TMFM…FWMP), 149–169 (IDPL…GWGG), 178–197 (ILAY…IQYA), 202–219 (LLAL…FLTL), 246–266 (LVLL…KWLI), 274–294 (DLPI…YFYL), and 326–346 (LALF…ILTL).

The protein belongs to the complex I subunit 2 family.

The protein localises to the mitochondrion inner membrane. The enzyme catalyses a ubiquinone + NADH + 5 H(+)(in) = a ubiquinol + NAD(+) + 4 H(+)(out). In terms of biological role, core subunit of the mitochondrial membrane respiratory chain NADH dehydrogenase (Complex I) that is believed to belong to the minimal assembly required for catalysis. Complex I functions in the transfer of electrons from NADH to the respiratory chain. The immediate electron acceptor for the enzyme is believed to be ubiquinone. In Carassius auratus (Goldfish), this protein is NADH-ubiquinone oxidoreductase chain 2 (MT-ND2).